A 206-amino-acid polypeptide reads, in one-letter code: Large ribosomal subunit protein bL25 (206 aa).

Belongs to the bacterial ribosomal protein bL25 family. CTC subfamily. In terms of assembly, part of the 50S ribosomal subunit; part of the 5S rRNA/L5/L18/L25 subcomplex. Contacts the 5S rRNA. Binds to the 5S rRNA independently of L5 and L18.

In terms of biological role, this is one of the proteins that binds to the 5S RNA in the ribosome where it forms part of the central protuberance. The sequence is that of Large ribosomal subunit protein bL25 from Paraburkholderia phytofirmans (strain DSM 17436 / LMG 22146 / PsJN) (Burkholderia phytofirmans).